Reading from the N-terminus, the 630-residue chain is DNA mismatch repair protein MutL (630 aa).

Over residues 398 to 408 (TQTNAFGSMAT) the composition is skewed to polar residues. Residues 398 to 425 (TQTNAFGSMATSRDSSRGSYSASESRQR) are disordered.

Belongs to the DNA mismatch repair MutL/HexB family.

In terms of biological role, this protein is involved in the repair of mismatches in DNA. It is required for dam-dependent methyl-directed DNA mismatch repair. May act as a 'molecular matchmaker', a protein that promotes the formation of a stable complex between two or more DNA-binding proteins in an ATP-dependent manner without itself being part of a final effector complex. This Shewanella baltica (strain OS185) protein is DNA mismatch repair protein MutL.